Consider the following 723-residue polypeptide: MSMFNKIVKEFQWGQHTVRMETGEIARQAGGAVLVDVEDTVVLATVVAAKNPKPGQDFFPLTVDYIEKTYAAGKIPGGFFKREGRPSENETLTSRLIDRPLRPLFPEGFYNDVQVVIHVVSLNPEVPADIPALIGASAALAVSGIPFNGPVGAARVGYKDGQYLLNPTRSQLATSDLDLVVAGTERAVLMVESEANQLSEDVMLGAVVYGHEQMQIAINAIHELVREGGKPEWDWAPAAKNEPLIAKVTEVALPLLQEAYQLRQKSARSQKLKEVNANVAAALAAAGVEADKVEVGNIMFDLEAKIVRGQVLAGEPRIDGRDTRTVRPIEIRSSVLPRAHGSALFTRGETQALVVATLGTKSDEQIIDALAGEYRDRFMLHYNMPPFATGETGRVGSPKRREIGHGRLAKRALIPVLPKDDEFAYTIRLVSEITESNGSSSMASVCGGCLALMDAGVPVKAHVAGVAMGLILEGNKFAVLTDILGDEDHLGDMDFKVAGTDNGITALQMDIKVQGITKEIMQVALAQAREGRLHILHKMQEAMGHARTELSAHAPRMITMKIHPDKIREVIGKGGSTIQALTKETGTTIDIQEDGTITIASTSTDGMAEAKRRIEGITAEAEVGKIYAGTVLKLLDFGAIVNILPGKDGLLHISEIVNERVKDIKDWLKEGQQVRVKLIQADEKGRLRLSLKAALTEEGGSISPINAGEAAAPAAPAEGSEQQ.

Residues aspartate 488 and aspartate 494 each contribute to the Mg(2+) site. The 60-residue stretch at proline 555 to isoleucine 614 folds into the KH domain. An S1 motif domain is found at glycine 624–lysine 692. Residues serine 701–glutamine 723 are disordered. Over residues alanine 707–glutamine 723 the composition is skewed to low complexity.

Belongs to the polyribonucleotide nucleotidyltransferase family. The cofactor is Mg(2+).

The protein localises to the cytoplasm. The enzyme catalyses RNA(n+1) + phosphate = RNA(n) + a ribonucleoside 5'-diphosphate. Its function is as follows. Involved in mRNA degradation. Catalyzes the phosphorolysis of single-stranded polyribonucleotides processively in the 3'- to 5'-direction. The polypeptide is Polyribonucleotide nucleotidyltransferase (Cupriavidus necator (strain ATCC 17699 / DSM 428 / KCTC 22496 / NCIMB 10442 / H16 / Stanier 337) (Ralstonia eutropha)).